The primary structure comprises 290 residues: Outer dense fiber protein 4 (290 aa).

S28 is modified (phosphoserine). 4 helical membrane passes run 44 to 64 (AQVV…LMVF), 132 to 152 (ISFI…HLPY), 164 to 184 (LIGI…LLLF), and 201 to 221 (IGWS…CGIL). The tract at residues 262–290 (ADILDPTQDDQKPLSSDNIALPPNPDTTD) is disordered.

It localises to the membrane. Functionally, component of the outer dense fibers (ODF) of spermatozoa which could be involved in sperm tail structure, sperm movement and general organization of cellular cytoskeleton. In Rattus norvegicus (Rat), this protein is Outer dense fiber protein 4 (Odf4).